We begin with the raw amino-acid sequence, 319 residues long: RNA exonuclease 4 (319 aa).

The segment at 1–75 is disordered; it reads MAALSSNWKK…GGVHSSKIEE (75 aa). The Exonuclease domain occupies 132-293; it reads KYIAIDCEMV…FRKHKSAFDV (162 aa). The segment at 295–319 is disordered; it reads HANRYAPKTASGGGQKGNKPKKKKK.

The protein belongs to the REXO4 family.

The protein localises to the nucleus. Its function is as follows. Exoribonuclease involved in ribosome biosynthesis. Involved in the processing of ITS1, the internal transcribed spacer localized between the 18S and 5.8S rRNAs. The protein is RNA exonuclease 4 (REX4) of Gibberella zeae (strain ATCC MYA-4620 / CBS 123657 / FGSC 9075 / NRRL 31084 / PH-1) (Wheat head blight fungus).